A 493-amino-acid chain; its full sequence is MECQRCPASARNPATVESRKEKFCDECFIKFVSTKQRKQMMKDEYFRNLFKVIYPFEKEGSVSKILLPLSLSDSGSLVMLDIVHDLLLEQTKQHNNRTGFTVDVLTVFTEENVSVIKERMESLINEKMSQLNKISNIFNVHFIDVNEFFNNASEVSTFIIDNENFEIFSKSKSVDDSNILTLKEILGKYCLNNSSRSDLISIIKTQLIKHFAYENGYNAIMWGHSMTKLSEVIISLVVKGKGSQIATFLDSESFDTLNNKPCKYKNLYPMKDLLSVEIESFLQIRNLAQFLINVEETNVKPNCLIARKSLPSLGQQKLVKNMTINEITNKYFQDIQNDYSNIISTVSRTADKLTQPKSSMAKPSQCQICQSKIYTNPSNWLNRITVTSPYPVETTEEKYLFKQWQDSKLGQSHTHYVELLNEIKQGASNSLDVEDGDVKLCYGCLILLNTSIKDKNLVWPKVDTMDITANATNNNKELSQILDQFEINSDGEE.

A Phosphoserine modification is found at Ser-489.

It belongs to the CTU2/NCS2 family. Interacts with NCS6 and URM1. May act by forming a heterodimer with NCS6.

It is found in the cytoplasm. It functions in the pathway tRNA modification; 5-methoxycarbonylmethyl-2-thiouridine-tRNA biosynthesis. Its function is as follows. Plays a central role in 2-thiolation of mcm(5)S(2)U at tRNA wobble positions of tRNA(Lys), tRNA(Glu) and tRNA(Gln). May act by forming a heterodimer with NCS6 that ligates sulfur from thiocarboxylated URM1 onto the uridine of tRNAs at wobble position. Prior mcm(5) tRNA modification by the elongator complex is required for 2-thiolation. May also be involved in protein urmylation. In Saccharomyces cerevisiae (strain AWRI1631) (Baker's yeast), this protein is Cytoplasmic tRNA 2-thiolation protein 2.